The sequence spans 485 residues: Glutamyl-tRNA(Gln) amidotransferase subunit A (485 aa).

Residues lysine 76 and serine 151 each act as charge relay system in the active site. The Acyl-ester intermediate role is filled by serine 175.

This sequence belongs to the amidase family. GatA subfamily. In terms of assembly, heterotrimer of A, B and C subunits.

It catalyses the reaction L-glutamyl-tRNA(Gln) + L-glutamine + ATP + H2O = L-glutaminyl-tRNA(Gln) + L-glutamate + ADP + phosphate + H(+). Functionally, allows the formation of correctly charged Gln-tRNA(Gln) through the transamidation of misacylated Glu-tRNA(Gln) in organisms which lack glutaminyl-tRNA synthetase. The reaction takes place in the presence of glutamine and ATP through an activated gamma-phospho-Glu-tRNA(Gln). The protein is Glutamyl-tRNA(Gln) amidotransferase subunit A of Thiobacillus denitrificans (strain ATCC 25259 / T1).